Reading from the N-terminus, the 854-residue chain is Selenocysteine insertion sequence-binding protein 2 (854 aa).

Disordered regions lie at residues 332-351 (ADPKNVSIPSSEALSSDPSY), 356-394 (HIIHPTQKSKASQGSDLEQNEASRKNKKKKEKSTSKYEV), 417-445 (ERRDRIETPKFQSKQQPQDNFKNNVKKSQ), and 488-619 (ECAS…PNHT). 2 stretches are compositionally biased toward polar residues: residues 338–350 (SIPSSEALSSDPS) and 361–372 (TQKSKASQGSDL). The short motif at 380–387 (KNKKKKEK) is the Nuclear localization signal element. Residues 426–445 (KFQSKQQPQDNFKNNVKKSQ) are compositionally biased toward polar residues. Basic and acidic residues predominate over residues 536–547 (ILKERQERKQRL). A compositionally biased stretch (polar residues) spans 548–559 (QENAVSPAFTSD). Acidic residues predominate over residues 560-572 (DTQDGESGGDDQF). Residues 593 to 611 (VEDKSEEPPGTELQRDTEA) show a composition bias toward basic and acidic residues. Residues 673-694 (LVLGLREVLKHLKLKKLKCVII) form an RNA-binding region. The interval 787–812 (EPRPQAPPSLPTQGPSCPAEDGPPAL) is disordered.

As to expression, expressed at high levels in testis.

The protein localises to the nucleus. Its subcellular location is the mitochondrion. Functionally, mRNA-binding protein that binds to the SECIS (selenocysteine insertion sequence) element present in the 3'-UTR of mRNAs encoding selenoproteins and facilitates the incorporation of the rare amino acid selenocysteine. Insertion of selenocysteine at UGA codons is mediated by SECISBP2 and EEFSEC: SECISBP2 (1) specifically binds the SECIS sequence once the 80S ribosome encounters an in-frame UGA codon and (2) contacts the RPS27A/eS31 of the 40S ribosome before ribosome stalling. (3) GTP-bound EEFSEC then delivers selenocysteinyl-tRNA(Sec) to the 80S ribosome and adopts a preaccommodated state conformation. (4) After GTP hydrolysis, EEFSEC dissociates from the assembly, selenocysteinyl-tRNA(Sec) accommodates, and peptide bond synthesis and selenoprotein elongation occur. In Homo sapiens (Human), this protein is Selenocysteine insertion sequence-binding protein 2.